The chain runs to 89 residues: HssA/B-like protein 14 (89 aa).

It belongs to the hssA/B family.

This is HssA/B-like protein 14 (hssl14) from Dictyostelium discoideum (Social amoeba).